Consider the following 420-residue polypeptide: MSNIRYISNLTRDTYALILAGGRGSRLYELTDWRAKPALYFGGKYRIIDFPLSNCINSGIRRVGVVTQYKSHSLIRHVTRGWGHFKKELGESVEILPASQQTSGNWYQGTADAVFQNIDIIRQEIPKYVMILSGDHIYRMDYAGLLAAHAESGAEMTVCCLETPIDEAAGAFGVMEVDSEHRVIGFEEKPAEPKSIPSDPTMCLASMGNYVFNTKFLFEQLKKDANNEKSDRDFGKDIIPAIIENHKVFAFPFSSAVAGQPSYWRDVGTLDSFFQANMELLLPTPPLNLYDAKWPIWTYQEQLPPAKFVFDDDDRRGMAVDSIVSGGCIISGAKVKRCVLFDEVRVCSYSFVKDSVLLPDVVVLKNCKIQNAILDRGCIIPEGMVIGYNHDHDRAKGFRVSEKGVTLVTRKMLGLPVGYE.

Alpha-D-glucose 1-phosphate is bound by residues Tyr-107, Gly-173, 188–189, and Ser-206; that span reads EK.

It belongs to the bacterial/plant glucose-1-phosphate adenylyltransferase family. Homotetramer.

It catalyses the reaction alpha-D-glucose 1-phosphate + ATP + H(+) = ADP-alpha-D-glucose + diphosphate. It functions in the pathway glycan biosynthesis; glycogen biosynthesis. Functionally, involved in the biosynthesis of ADP-glucose, a building block required for the elongation reactions to produce glycogen. Catalyzes the reaction between ATP and alpha-D-glucose 1-phosphate (G1P) to produce pyrophosphate and ADP-Glc. In Shewanella frigidimarina (strain NCIMB 400), this protein is Glucose-1-phosphate adenylyltransferase.